We begin with the raw amino-acid sequence, 289 residues long: Pantothenate synthetase (289 aa).

Residue 28-35 coordinates ATP; the sequence is MGCLHEGH. Residue H35 is the Proton donor of the active site. Q59 contacts (R)-pantoate. Residue Q59 participates in beta-alanine binding. ATP is bound at residue 147 to 150; sequence GLKD. Q153 serves as a coordination point for (R)-pantoate. Residues V176 and 184 to 187 contribute to the ATP site; that span reads MSSR.

Belongs to the pantothenate synthetase family. As to quaternary structure, homodimer.

It is found in the cytoplasm. The enzyme catalyses (R)-pantoate + beta-alanine + ATP = (R)-pantothenate + AMP + diphosphate + H(+). Its pathway is cofactor biosynthesis; (R)-pantothenate biosynthesis; (R)-pantothenate from (R)-pantoate and beta-alanine: step 1/1. Functionally, catalyzes the condensation of pantoate with beta-alanine in an ATP-dependent reaction via a pantoyl-adenylate intermediate. This chain is Pantothenate synthetase, found in Magnetococcus marinus (strain ATCC BAA-1437 / JCM 17883 / MC-1).